The sequence spans 358 residues: Protein UL24 (358 aa).

This sequence belongs to the herpesviridae US22 family.

Its subcellular location is the virion tegument. The protein is Protein UL24 (UL24) of Homo sapiens (Human).